The following is a 393-amino-acid chain: Na(+)/H(+) antiporter NhaA (393 aa).

12 helical membrane passes run 23-43 (AGGITLMAAAALALIVANSPF), 58-78 (LSLAHWINDALMAIFFLLVGL), 96-116 (MLPGIAAAGGVILPAIIFAVL), 126-146 (GWAVPSATDIAFALGVLSLLG), 155-175 (VFLATLAILDDLAAVVIIAIF), 178-198 (AEISMPYLGAAFITAAVLFVM), 201-221 (MGVVKLLPYLISAVILWFFVF), 224-244 (GVHATVAGVVAALMIPLKPAP), 265-285 (VAFIVVPIFGFANAGISFKGL), 298-318 (ILLGLFLGKQFGVFGAAWLAI), 334-354 (LYGVAILCGIGFTMSIFIGLL), and 367-387 (IGVLSGSALSAICGYLLLRAA).

The protein belongs to the NhaA Na(+)/H(+) (TC 2.A.33) antiporter family.

Its subcellular location is the cell inner membrane. The catalysed reaction is Na(+)(in) + 2 H(+)(out) = Na(+)(out) + 2 H(+)(in). Its function is as follows. Na(+)/H(+) antiporter that extrudes sodium in exchange for external protons. In Brucella canis (strain ATCC 23365 / NCTC 10854 / RM-666), this protein is Na(+)/H(+) antiporter NhaA.